The sequence spans 171 residues: Lipoprotein signal peptidase (171 aa).

Helical transmembrane passes span 15-35 (WLWLALLVFIADITIKLIVMD), 47-67 (VLPFFNLLYVHNYGAAFSFLS), 72-92 (WQRWLFTGIAFVVTGMLAYWM), and 107-127 (ALIIGGAVGNVFDRIVHGFVV). Catalysis depends on residues Asp-128 and Asp-146. The helical transmembrane segment at 141–161 (AFNLADSTICIGAAMIILDGF) threads the bilayer.

The protein belongs to the peptidase A8 family.

The protein resides in the cell inner membrane. It catalyses the reaction Release of signal peptides from bacterial membrane prolipoproteins. Hydrolyzes -Xaa-Yaa-Zaa-|-(S,diacylglyceryl)Cys-, in which Xaa is hydrophobic (preferably Leu), and Yaa (Ala or Ser) and Zaa (Gly or Ala) have small, neutral side chains.. It functions in the pathway protein modification; lipoprotein biosynthesis (signal peptide cleavage). In terms of biological role, this protein specifically catalyzes the removal of signal peptides from prolipoproteins. The polypeptide is Lipoprotein signal peptidase (Vibrio cholerae serotype O1 (strain ATCC 39541 / Classical Ogawa 395 / O395)).